The sequence spans 199 residues: Adenylyl-sulfate kinase (199 aa).

The tract at residues 1–22 is disordered; sequence MSESNHITWHDSEVTKKQRQHK. Position 34–41 (34–41) interacts with ATP; the sequence is GLSGSGKS. The active-site Phosphoserine intermediate is serine 108.

This sequence belongs to the APS kinase family.

It carries out the reaction adenosine 5'-phosphosulfate + ATP = 3'-phosphoadenylyl sulfate + ADP + H(+). Its pathway is sulfur metabolism; hydrogen sulfide biosynthesis; sulfite from sulfate: step 2/3. Its function is as follows. Catalyzes the synthesis of activated sulfate. In Staphylococcus epidermidis (strain ATCC 12228 / FDA PCI 1200), this protein is Adenylyl-sulfate kinase.